The following is a 334-amino-acid chain: MQEIEKLRILQTEREALKNRNRVIEHEKKTEDHTESVCPECKSRQLVHDYERAELVCQNCGLVIDDDFIDRGPEWRAFDHDQRMKRSRVGAPMTFTIHDKGLSTMIDWRNRDSYGRAISSKNRAQLYRLRKWQRRIRVSNATERNLAFALSELDRMASALGLPRNVRETAAVVYRDAVDKNLIRGRSIEGVAAAALYAACRQCSVPRTLDEIAEVSRVSRKEIGRTYRFISRELGLKLLPTSPIDYVPRFCSGLTLKGEVQSRAVEILRQAAERELTSGRGPTGVAAAAIYISSILGGERRTQREVAEVAGVTEVTIRNRYKELAEKLDIEIIL.

Residues 34 to 65 form a TFIIB-type zinc finger; that stretch reads TESVCPECKSRQLVHDYERAELVCQNCGLVID. The Zn(2+) site is built by Cys-38, Cys-41, Cys-57, and Cys-60. Tandem repeats lie at residues 151-234 and 245-326.

Belongs to the TFIIB family.

Functionally, stabilizes TBP binding to an archaeal box-A promoter. Also responsible for recruiting RNA polymerase II to the pre-initiation complex (DNA-TBP-TFIIB). The chain is Transcription initiation factor IIB from Methanosphaerula palustris (strain ATCC BAA-1556 / DSM 19958 / E1-9c).